We begin with the raw amino-acid sequence, 249 residues long: Proteasome activator complex subunit 1 (249 aa).

Positions 60–102 are disordered; that stretch reads PLDIPVPDPVKEKEKEERKKQQEKEEKDEKKKGDEDDKGPPCG. The segment covering 68 to 98 has biased composition (basic and acidic residues); it reads PVKEKEKEERKKQQEKEEKDEKKKGDEDDKG.

It belongs to the PA28 family. As to quaternary structure, heterodimer of PSME1 and PSME2, which forms a hexameric ring. PSME1 can form homoheptamers.

Implicated in immunoproteasome assembly and required for efficient antigen processing. The PA28 activator complex enhances the generation of class I binding peptides by altering the cleavage pattern of the proteasome. In Rattus norvegicus (Rat), this protein is Proteasome activator complex subunit 1 (Psme1).